The sequence spans 296 residues: GDGENGNGNGNGNGNGNGNGNGNGNGNGNGNGNGNGNGNGNGNGNGNGNGNGNGNGNGNGNGNGNGNGNGNGNGNGNGYFDDDDWDDFDWDDDDWNDNGNGDNGDDDDFWDDWDDDRFDDDRFDDDRFDDDRFDDDRWDDDDNDDWDDDDRWGDDDNDDWDDDDRWGDDDNDDWDDDDRWGDDDNDDWDDDDRWGDDNGNGNGNGNGNGNGDDDDDNGGYAFLRRALARASARARAAASAAGRSRGGSGGSGGSGGSGGSARARARARARAFASARASSGNGVNGGNGKKRSYTSY.

Residues 1–77 are compositionally biased toward gly residues; that stretch reads GDGENGNGNG…GNGNGNGNGN (77 aa). 2 disordered regions span residues 1–219 and 233–296; these read GDGE…DNGG and RARA…YTSY. 2 stretches are compositionally biased toward acidic residues: residues 80–96 and 103–194; these read FDDDDWDDFDWDDDDWN and NGDD…DDRW. Residues 198–210 show a composition bias toward gly residues; it reads NGNGNGNGNGNGN. Over residues 233–243 the composition is skewed to low complexity; it reads RARAAASAAGR. The segment covering 244–259 has biased composition (gly residues); the sequence is SRGGSGGSGGSGGSGG. Residues 270-281 show a composition bias toward low complexity; it reads RAFASARASSGN.

Component of the acid-soluble and acid-insoluble organic matrix of calcified shell layers (at protein level).

It is found in the secreted. This chain is Aspartate and glycine-rich protein, found in Haliotis asinina (Donkey's ear abalone).